The following is a 343-amino-acid chain: Ribosomal RNA small subunit methyltransferase, chloroplastic (343 aa).

Residues 1-48 (MMNAVITSATINCNSLSPSWTCGDNSPSKLLLGEISAALSRRRTVKVS) constitute a chloroplast transit peptide. 6 residues coordinate S-adenosyl-L-methionine: His78, Met80, Gly105, Glu126, Asp151, and Asn183.

This sequence belongs to the class I-like SAM-binding methyltransferase superfamily. rRNA adenine N(6)-methyltransferase family.

Its subcellular location is the plastid. It localises to the chloroplast. Functionally, required for methylation of the 3' adenosines in the small subunit of plastid rRNA. Essential for chloroplast biogenesis at low temperatures. The sequence is that of Ribosomal RNA small subunit methyltransferase, chloroplastic from Arabidopsis thaliana (Mouse-ear cress).